The following is a 332-amino-acid chain: MRAALAAAAALPVPDAEGDHGPARPHPLAPGALVLIGLSGGADSLALAAAAAFEAPRAGFRSGAIVVDHGLQPGSAEVAAGAACQARALGLGPVLVERVRVEAAGGPEGAARAARHTAFDSAARATAAARILLAHTLDDQAETVLLGLARGSGPSSLQGMLPDTGRLLRPFLGLRRATTRAFCADSGLEPWDDPHNDDPAYTRVRVRSAVLPVLEQELGPGVAEALARTAEQLREDDQALDSLALEGAQELVSQADDGSVALEVRGLAAGPPALRQRIIRLVVSAEFGVSLSRSHTLAVAALIADWHGQGPLSLPGVRVVRQNGLLTFHPHT.

Residue serine 39–serine 44 coordinates ATP.

It belongs to the tRNA(Ile)-lysidine synthase family.

It localises to the cytoplasm. The catalysed reaction is cytidine(34) in tRNA(Ile2) + L-lysine + ATP = lysidine(34) in tRNA(Ile2) + AMP + diphosphate + H(+). Ligates lysine onto the cytidine present at position 34 of the AUA codon-specific tRNA(Ile) that contains the anticodon CAU, in an ATP-dependent manner. Cytidine is converted to lysidine, thus changing the amino acid specificity of the tRNA from methionine to isoleucine. This Leifsonia xyli subsp. xyli (strain CTCB07) protein is tRNA(Ile)-lysidine synthase.